The chain runs to 324 residues: Probable RuBisCO transcriptional regulator (324 aa).

Residues 8-65 (FSLEQLRILKAIATEGSFKKAAESLYMTQPAISLQIQTLEKKLNIALFDRSGRRALMT) enclose the HTH lysR-type domain. A DNA-binding region (H-T-H motif) is located at residues 25 to 44 (FKKAAESLYMTQPAISLQIQ).

It belongs to the LysR transcriptional regulatory family.

Its subcellular location is the plastid. It is found in the cyanelle. In terms of biological role, trans-acting transcriptional regulator of RuBisCO genes (rbcL and rbcS) expression. This is Probable RuBisCO transcriptional regulator (rbcR) from Cyanophora paradoxa.